The sequence spans 335 residues: Syntaxin-18 (335 aa).

Topologically, residues 1 to 309 are cytoplasmic; sequence MAVDITLLFR…EDIREAIKNN (309 aa). 2 stretches are compositionally biased toward basic and acidic residues: residues 168-182 and 192-208; these read KLEP…ESTS and KDSE…EKIL. Positions 168-226 are disordered; it reads KLEPEPNTKTRESTSSEKVSQSPSKDSEENPATEERPEKILAETQPELGTWGDGKGEDE. Positions 243-305 constitute a t-SNARE coiled-coil homology domain; it reads IGEMNSLFDE…KEGNEDIREA (63 aa). A helical; Anchor for type IV membrane protein membrane pass occupies residues 310-330; that stretch reads AGFRVWILFFLVMCSFSLLFL. At 331 to 335 the chain is on the vesicular side; sequence DWYDS.

This sequence belongs to the syntaxin family. In terms of assembly, component of a SNARE complex consisting of STX18, USE1L, BNIP1/SEC20L, and SEC22B. RINT1/TIP20L and ZW10 are associated with the complex through interaction with BNIP1/SEC20L. Interacts directly with USE1L and BNIP1/SEC20L. In terms of tissue distribution, ubiquitous.

The protein resides in the endoplasmic reticulum membrane. It localises to the golgi apparatus membrane. In terms of biological role, syntaxin that may be involved in targeting and fusion of Golgi-derived retrograde transport vesicles with the ER. In Homo sapiens (Human), this protein is Syntaxin-18 (STX18).